A 49-amino-acid polypeptide reads, in one-letter code: MRVNITLACTECGDRNYISKKNKRNNAERLELKKYCKRDKKSTLHRETK.

It belongs to the bacterial ribosomal protein bL33 family.

This Bacillus cytotoxicus (strain DSM 22905 / CIP 110041 / 391-98 / NVH 391-98) protein is Large ribosomal subunit protein bL33A.